A 134-amino-acid chain; its full sequence is Large ribosomal subunit protein eL27 (134 aa).

The region spanning 5 to 40 (LKSGKVVVVLSGRFAGKKAVIVRNFDDGTSSRPYGH) is the KOW domain.

This sequence belongs to the eukaryotic ribosomal protein eL27 family.

The polypeptide is Large ribosomal subunit protein eL27 (RPL27) (Pyrobotrys stellatus (Green alga)).